The chain runs to 453 residues: Ribosomal protein uS12 methylthiotransferase RimO (453 aa).

Positions P5–P120 constitute an MTTase N-terminal domain. [4Fe-4S] cluster-binding residues include C14, C50, C79, C151, C155, and C158. The Radical SAM core domain maps to L137–N382. Positions Q385–V453 constitute a TRAM domain.

This sequence belongs to the methylthiotransferase family. RimO subfamily. The cofactor is [4Fe-4S] cluster.

The protein resides in the cytoplasm. It carries out the reaction L-aspartate(89)-[ribosomal protein uS12]-hydrogen + (sulfur carrier)-SH + AH2 + 2 S-adenosyl-L-methionine = 3-methylsulfanyl-L-aspartate(89)-[ribosomal protein uS12]-hydrogen + (sulfur carrier)-H + 5'-deoxyadenosine + L-methionine + A + S-adenosyl-L-homocysteine + 2 H(+). Its function is as follows. Catalyzes the methylthiolation of an aspartic acid residue of ribosomal protein uS12. In Burkholderia cenocepacia (strain HI2424), this protein is Ribosomal protein uS12 methylthiotransferase RimO.